A 124-amino-acid chain; its full sequence is Small ribosomal subunit protein bS6 (124 aa).

The tract at residues 99 to 124 (PLPAPRIVPGSEPEPVEQQEAAAVEA) is disordered. Over residues 114–124 (VEQQEAAAVEA) the composition is skewed to low complexity.

Belongs to the bacterial ribosomal protein bS6 family.

In terms of biological role, binds together with bS18 to 16S ribosomal RNA. This is Small ribosomal subunit protein bS6 from Prochlorococcus marinus (strain MIT 9303).